The sequence spans 363 residues: Phosphoribosylformylglycinamidine cyclo-ligase (363 aa).

It belongs to the AIR synthase family.

It is found in the cytoplasm. It carries out the reaction 2-formamido-N(1)-(5-O-phospho-beta-D-ribosyl)acetamidine + ATP = 5-amino-1-(5-phospho-beta-D-ribosyl)imidazole + ADP + phosphate + H(+). Its pathway is purine metabolism; IMP biosynthesis via de novo pathway; 5-amino-1-(5-phospho-D-ribosyl)imidazole from N(2)-formyl-N(1)-(5-phospho-D-ribosyl)glycinamide: step 2/2. The chain is Phosphoribosylformylglycinamidine cyclo-ligase from Bartonella tribocorum (strain CIP 105476 / IBS 506).